Consider the following 403-residue polypeptide: 8-amino-7-oxononanoate synthase (403 aa).

Arg-22 is a binding site for substrate. Residue 109 to 110 coordinates pyridoxal 5'-phosphate; that stretch reads GF. His-134 contacts substrate. Residues Ser-178, His-206, and Thr-232 each coordinate pyridoxal 5'-phosphate. Position 235 is an N6-(pyridoxal phosphate)lysine (Lys-235). Thr-348 serves as a coordination point for substrate. The segment at 383–403 is disordered; that stretch reads SNDSGSKPSIESSFELKKEAQ. Residues 385–394 are compositionally biased toward polar residues; the sequence is DSGSKPSIES.

Belongs to the class-II pyridoxal-phosphate-dependent aminotransferase family. BioF subfamily. In terms of assembly, homodimer. Pyridoxal 5'-phosphate is required as a cofactor.

It catalyses the reaction 6-carboxyhexanoyl-[ACP] + L-alanine + H(+) = (8S)-8-amino-7-oxononanoate + holo-[ACP] + CO2. It participates in cofactor biosynthesis; biotin biosynthesis. Functionally, catalyzes the decarboxylative condensation of pimeloyl-[acyl-carrier protein] and L-alanine to produce 8-amino-7-oxononanoate (AON), [acyl-carrier protein], and carbon dioxide. The chain is 8-amino-7-oxononanoate synthase from Vibrio atlanticus (strain LGP32) (Vibrio splendidus (strain Mel32)).